The primary structure comprises 359 residues: DNA replication and repair protein RecF (359 aa).

30–37 (GKNGIGKT) serves as a coordination point for ATP.

Belongs to the RecF family.

Its subcellular location is the cytoplasm. In terms of biological role, the RecF protein is involved in DNA metabolism; it is required for DNA replication and normal SOS inducibility. RecF binds preferentially to single-stranded, linear DNA. It also seems to bind ATP. The chain is DNA replication and repair protein RecF from Flavobacterium johnsoniae (strain ATCC 17061 / DSM 2064 / JCM 8514 / BCRC 14874 / CCUG 350202 / NBRC 14942 / NCIMB 11054 / UW101) (Cytophaga johnsonae).